A 332-amino-acid chain; its full sequence is Ketol-acid reductoisomerase (NADP(+)) (332 aa).

The KARI N-terminal Rossmann domain occupies Met-1 to Thr-182. Residues Tyr-25–Gln-28 and Asp-83–Gln-86 each bind NADP(+). His-108 is a catalytic residue. Gly-134 is a binding site for NADP(+). A KARI C-terminal knotted domain is found at Thr-183 to Leu-328. Residues Asp-191, Glu-195, Glu-227, and Glu-231 each contribute to the Mg(2+) site. Ser-252 contributes to the substrate binding site.

This sequence belongs to the ketol-acid reductoisomerase family. It depends on Mg(2+) as a cofactor.

It catalyses the reaction (2R)-2,3-dihydroxy-3-methylbutanoate + NADP(+) = (2S)-2-acetolactate + NADPH + H(+). The enzyme catalyses (2R,3R)-2,3-dihydroxy-3-methylpentanoate + NADP(+) = (S)-2-ethyl-2-hydroxy-3-oxobutanoate + NADPH + H(+). The protein operates within amino-acid biosynthesis; L-isoleucine biosynthesis; L-isoleucine from 2-oxobutanoate: step 2/4. It participates in amino-acid biosynthesis; L-valine biosynthesis; L-valine from pyruvate: step 2/4. Functionally, involved in the biosynthesis of branched-chain amino acids (BCAA). Catalyzes an alkyl-migration followed by a ketol-acid reduction of (S)-2-acetolactate (S2AL) to yield (R)-2,3-dihydroxy-isovalerate. In the isomerase reaction, S2AL is rearranged via a Mg-dependent methyl migration to produce 3-hydroxy-3-methyl-2-ketobutyrate (HMKB). In the reductase reaction, this 2-ketoacid undergoes a metal-dependent reduction by NADPH to yield (R)-2,3-dihydroxy-isovalerate. This is Ketol-acid reductoisomerase (NADP(+)) from Dehalococcoides mccartyi (strain CBDB1).